The primary structure comprises 326 residues: Thiazole synthase (326 aa).

The Schiff-base intermediate with DXP role is filled by lysine 168. Residues glycine 229, alanine 255–glycine 256, and asparagine 277–threonine 278 contribute to the 1-deoxy-D-xylulose 5-phosphate site.

The protein belongs to the ThiG family. As to quaternary structure, homotetramer. Forms heterodimers with either ThiH or ThiS.

Its subcellular location is the cytoplasm. It catalyses the reaction [ThiS sulfur-carrier protein]-C-terminal-Gly-aminoethanethioate + 2-iminoacetate + 1-deoxy-D-xylulose 5-phosphate = [ThiS sulfur-carrier protein]-C-terminal Gly-Gly + 2-[(2R,5Z)-2-carboxy-4-methylthiazol-5(2H)-ylidene]ethyl phosphate + 2 H2O + H(+). It participates in cofactor biosynthesis; thiamine diphosphate biosynthesis. Its function is as follows. Catalyzes the rearrangement of 1-deoxy-D-xylulose 5-phosphate (DXP) to produce the thiazole phosphate moiety of thiamine. Sulfur is provided by the thiocarboxylate moiety of the carrier protein ThiS. In vitro, sulfur can be provided by H(2)S. The polypeptide is Thiazole synthase (Magnetococcus marinus (strain ATCC BAA-1437 / JCM 17883 / MC-1)).